A 264-amino-acid chain; its full sequence is Indole-3-glycerol phosphate synthase (264 aa).

The protein belongs to the TrpC family.

The enzyme catalyses 1-(2-carboxyphenylamino)-1-deoxy-D-ribulose 5-phosphate + H(+) = (1S,2R)-1-C-(indol-3-yl)glycerol 3-phosphate + CO2 + H2O. Its pathway is amino-acid biosynthesis; L-tryptophan biosynthesis; L-tryptophan from chorismate: step 4/5. The protein is Indole-3-glycerol phosphate synthase of Stenotrophomonas maltophilia (strain R551-3).